The following is a 689-amino-acid chain: Solute carrier family 22 member 23 (689 aa).

Disordered regions lie at residues 1–55 and 162–188; these read MAID…PLPA and TASWGTTSNRSNSSDTPPLPSPPGKGN. N24 carries an N-linked (GlcNAc...) asparagine glycan. Over residues 165-177 the composition is skewed to polar residues; sequence WGTTSNRSNSSDT. 2 helical membrane-spanning segments follow: residues 229-249 and 253-273; these read FSLLVGLIFGYLITGCIADWV and PVLLFSTIFILIFGLTVALSV. N274 is a glycosylation site (N-linked (GlcNAc...) asparagine). A run of 8 helical transmembrane segments spans residues 283 to 303, 310 to 330, 339 to 359, 466 to 486, 489 to 509, 541 to 561, 572 to 592, and 601 to 621; these read FFEGFCLAGIILTLYALRIEL, FIITMVASFVAMAGQFLMPGL, VLQALIICPFLLMLLYWSIFP, TMASIALASCLAMCLVVKFLG, GGLLLFMILTALASLLQLGLL, IAFSIVGMFASHAVGSLSVFF, CGGLGLVLASAGFGMLTAPII, and FLHHIIFACCTLICIICILLL.

It belongs to the major facilitator (TC 2.A.1) superfamily. Organic cation transporter (TC 2.A.1.19) family.

The protein resides in the membrane. The polypeptide is Solute carrier family 22 member 23 (Slc22a23) (Mus musculus (Mouse)).